Here is a 98-residue protein sequence, read N- to C-terminus: uncharacterized protein (98 aa).

2 helical membrane-spanning segments follow: residues 14 to 34 (FLVI…PVTA) and 41 to 61 (MTGA…ASII).

Its subcellular location is the cell membrane. This is an uncharacterized protein from Haemophilus influenzae (strain ATCC 51907 / DSM 11121 / KW20 / Rd).